The primary structure comprises 986 residues: Zinc finger protein 445 (986 aa).

Positions 52–134 constitute an SCAN box domain; the sequence is RQLFRQLRYH…ALLEELQRDL (83 aa). The 71-residue stretch at 219 to 289 folds into the KRAB domain; that stretch reads LTFQDVEVTF…NICTVQLKRD (71 aa). Residues K302, K360, and K385 each participate in a glycyl lysine isopeptide (Lys-Gly) (interchain with G-Cter in SUMO2) cross-link. A disordered region spans residues 433–460; that stretch reads QNTGLKENGKDRYGETSRKSWHAHPEHR. Residues 439–460 show a composition bias toward basic and acidic residues; sequence ENGKDRYGETSRKSWHAHPEHR. 2 C2H2-type zinc fingers span residues 470 to 492 and 498 to 520; these read FQCR…EKIH and YQCS…QKTH. K524 participates in a covalent cross-link: Glycyl lysine isopeptide (Lys-Gly) (interchain with G-Cter in SUMO2). 2 consecutive C2H2-type zinc fingers follow at residues 553–575 and 581–604; these read LHCN…QRIH and YKCT…KLHH. K609 is covalently cross-linked (Glycyl lysine isopeptide (Lys-Gly) (interchain with G-Cter in SUMO2)). 2 consecutive C2H2-type zinc fingers follow at residues 634–656 and 662–686; these read FPCQ…QRIH and YQCS…RTQH. K691 is covalently cross-linked (Glycyl lysine isopeptide (Lys-Gly) (interchain with G-Cter in SUMO2)). 4 C2H2-type zinc fingers span residues 718–740, 746–768, 796–818, and 824–846; these read NKCK…ERVH, YQCR…QRKH, FWCQ…KGIH, and FKCN…QRIH. K929 is covalently cross-linked (Glycyl lysine isopeptide (Lys-Gly) (interchain with G-Cter in SUMO2)). 2 consecutive C2H2-type zinc fingers follow at residues 933-955 and 961-983; these read HKCS…KRCH and FKCI…MKNH.

Belongs to the krueppel C2H2-type zinc-finger protein family.

The protein resides in the nucleus. In terms of biological role, transcription regulator required to maintain maternal and paternal gene imprinting, a process by which gene expression is restricted in a parent of origin-specific manner by epigenetic modification of genomic DNA and chromatin, including DNA methylation. Acts by controlling DNA methylation during the earliest multicellular stages of development at multiple imprinting control regions (ICRs). Acts together with ZFP57, but ZFP57 plays the predominant role in imprinting maintenance. In contrast, ZNF445 seems to be the major factor in human early embryonic imprinting maintenance. This Mus musculus (Mouse) protein is Zinc finger protein 445 (Znf445).